Reading from the N-terminus, the 387-residue chain is Oxidase FUB9 (387 aa).

The interval 1-20 is disordered; it reads MSRTNLPIQPAKMSDATSSK. The FMN hydroxy acid dehydrogenase domain occupies 18–379; the sequence is SSKPQIFSIQ…TPAHLSILNA (362 aa). Residue Y44 participates in a 2-oxocarboxylate binding. FMN contacts are provided by S126, Q150, and T178. R187 contacts a 2-oxocarboxylate. K250 serves as a coordination point for FMN. H274 acts as the Proton acceptor in catalysis. R277 provides a ligand contact to a 2-oxocarboxylate. FMN contacts are provided by residues 305-309 and 328-329; these read DGGFR and GR.

The protein belongs to the FMN-dependent alpha-hydroxy acid dehydrogenase family. The cofactor is FMN.

It functions in the pathway mycotoxin biosynthesis. Functionally, oxidase; part of the gene cluster that mediates the biosynthesis of fusaric acid, a mycotoxin with low to moderate toxicity to animals and humans, but with high phytotoxic properties. L-aspartate is suggested as fusaric acid amino acid precursor that is activated and further processed to O-acetyl-L-homoserine by cluster enzymes aspartate kinase FUB3 and homoserine O-acetyltransferase FUB5, as well as enzymes of the primary metabolism. The polyketide synthase (PKS) FUB1 generates the triketide trans-2-hexenal which is presumptively released by the hydrolase FUB4 and linked to the NRPS-bound amino acid precursor by NAD(P)-dependent dehydrogenase FUB6. FUB1, FUB4, and the non-canonical NRPS Fub8 may form an enzyme complex. Further processing of the NRPS-bound intermediate might be carried out by FUB6 and the sulfhydrylase FUB7, enabling a spontaneous electrocyclization to close the carbon backbone of fusaric acid. Dihydrofusaric acid is likely to be released via reduction by the thioester reductase (TR) domain of FUB8 whereupon the final oxidation to fusaric acid may (also) be performed by the FMN-dependent dehydrogenase FUB9. The sequence is that of Oxidase FUB9 from Fusarium oxysporum f. sp. lycopersici (strain 4287 / CBS 123668 / FGSC 9935 / NRRL 34936) (Fusarium vascular wilt of tomato).